Consider the following 356-residue polypeptide: Alanine racemase, catabolic (356 aa).

The active-site Proton acceptor; specific for D-alanine is the K35. K35 is subject to N6-(pyridoxal phosphate)lysine. R130 is a substrate binding site. Y253 serves as the catalytic Proton acceptor; specific for L-alanine. M301 provides a ligand contact to substrate.

Belongs to the alanine racemase family. Requires pyridoxal 5'-phosphate as cofactor.

It carries out the reaction L-alanine = D-alanine. Functionally, isomerizes L-alanine to D-alanine which is then oxidized to pyruvate by DadA. This chain is Alanine racemase, catabolic (dadX), found in Escherichia coli O6:H1 (strain CFT073 / ATCC 700928 / UPEC).